Reading from the N-terminus, the 107-residue chain is Protein Asterix (107 aa).

The span at 1-15 (MSHSHGNASSVNDPR) shows a compositional bias: polar residues. A disordered region spans residues 1–25 (MSHSHGNASSVNDPRQPSAAKPYIP). The helical transmembrane segment at 82–98 (ISMAMMFAIMGLVTNYL) threads the bilayer.

Belongs to the Asterix family.

The protein resides in the membrane. The sequence is that of Protein Asterix from Arabidopsis thaliana (Mouse-ear cress).